We begin with the raw amino-acid sequence, 284 residues long: Tropomyosin (284 aa).

The disordered stretch occupies residues 1–38 (MEAIKKKMQAMKLEKDNAVDRAETAEQQSREAALRAEK). The stretch at 1–284 (MEAIKKKMQA…DQTFSELTGY (284 aa)) forms a coiled coil. Basic and acidic residues predominate over residues 12–38 (KLEKDNAVDRAETAEQQSREAALRAEK).

This sequence belongs to the tropomyosin family. In terms of assembly, homodimer.

In terms of biological role, tropomyosin, in association with the troponin complex, plays a central role in the calcium dependent regulation of muscle contraction. In Rhipicephalus microplus (Cattle tick), this protein is Tropomyosin.